The chain runs to 209 residues: GTP cyclohydrolase 1 (209 aa).

Zn(2+) contacts are provided by Cys100, His103, and Cys171.

Belongs to the GTP cyclohydrolase I family. In terms of assembly, toroid-shaped homodecamer, composed of two pentamers of five dimers.

It catalyses the reaction GTP + H2O = 7,8-dihydroneopterin 3'-triphosphate + formate + H(+). It functions in the pathway cofactor biosynthesis; 7,8-dihydroneopterin triphosphate biosynthesis; 7,8-dihydroneopterin triphosphate from GTP: step 1/1. This chain is GTP cyclohydrolase 1, found in Ralstonia nicotianae (strain ATCC BAA-1114 / GMI1000) (Ralstonia solanacearum).